Consider the following 149-residue polypeptide: Arginine repressor (149 aa).

It belongs to the ArgR family.

The protein resides in the cytoplasm. Its pathway is amino-acid biosynthesis; L-arginine biosynthesis [regulation]. Regulates arginine biosynthesis genes. In Bacillus velezensis (strain DSM 23117 / BGSC 10A6 / LMG 26770 / FZB42) (Bacillus amyloliquefaciens subsp. plantarum), this protein is Arginine repressor.